The chain runs to 132 residues: Ribosome-binding factor A (132 aa).

This sequence belongs to the RbfA family. In terms of assembly, monomer. Binds 30S ribosomal subunits, but not 50S ribosomal subunits or 70S ribosomes.

The protein localises to the cytoplasm. In terms of biological role, one of several proteins that assist in the late maturation steps of the functional core of the 30S ribosomal subunit. Associates with free 30S ribosomal subunits (but not with 30S subunits that are part of 70S ribosomes or polysomes). Required for efficient processing of 16S rRNA. May interact with the 5'-terminal helix region of 16S rRNA. The polypeptide is Ribosome-binding factor A (Pasteurella multocida (strain Pm70)).